A 700-amino-acid polypeptide reads, in one-letter code: ATP-dependent zinc metalloprotease FtsH (700 aa).

Over 1–20 (MSSDNGSGRQGGDRGGSTGY) the chain is Cytoplasmic. The helical transmembrane segment at 21–41 (NLLMYLGFGAIIATLVALYVL) threads the bilayer. Residues 42–171 (QMFQTSLDYT…FRHADPPGPW (130 aa)) are Periplasmic-facing. The chain crosses the membrane as a helical span at residues 172 to 192 (EQHSQLIIGMLLAAMLIYIVV). The Cytoplasmic segment spans residues 193 to 700 (RRLSAAGSPM…ITAPATERSG (508 aa)). 262–269 (GPPGTGKT) contributes to the ATP binding site. His484 contributes to the Zn(2+) binding site. Glu485 is an active-site residue. 2 residues coordinate Zn(2+): His488 and Asp561.

The protein in the central section; belongs to the AAA ATPase family. This sequence in the C-terminal section; belongs to the peptidase M41 family. Homohexamer. It depends on Zn(2+) as a cofactor.

Its subcellular location is the cell inner membrane. Functionally, acts as a processive, ATP-dependent zinc metallopeptidase for both cytoplasmic and membrane proteins. Plays a role in the quality control of integral membrane proteins. The sequence is that of ATP-dependent zinc metalloprotease FtsH from Pirellula staleyi (strain ATCC 27377 / DSM 6068 / ICPB 4128) (Pirella staleyi).